The sequence spans 63 residues: Large ribosomal subunit protein bL28 (63 aa).

This sequence belongs to the bacterial ribosomal protein bL28 family.

The protein is Large ribosomal subunit protein bL28 of Hydrogenobaculum sp. (strain Y04AAS1).